Reading from the N-terminus, the 477-residue chain is Myc-associated zinc finger protein (477 aa).

Disordered stretches follow at residues 59 to 78 (AQSP…APAA) and 121 to 146 (TVDT…PAAE). Over residues 130 to 141 (PPAPPPPPPPVS) the composition is skewed to pro residues. 4 C2H2-type zinc fingers span residues 190-212 (YICA…EAIH), 279-301 (HACE…KLSH), 307-329 (YQCP…VRSH), and 337-360 (YNCS…RQVH). S361 bears the Phosphoserine mark. The C2H2-type 5 zinc-finger motif lies at 366-388 (FKCEKCEAAFATKDRLRAHTVRH). The C2H2-type 6; atypical zinc-finger motif lies at 392–413 (VPCHVCGKMLSSAYISDHMKVH).

As to quaternary structure, interacts with BPTF. Forms a heterodimer with MAZ isoform 2; the interaction inhibits MAZ isoform 1-mediated transcription activation. In terms of assembly, forms a heterodimer with MAZ isoform 1; the interaction inhibits MAZ isoform 1-mediated transcription activation. Present in kidney, liver and brain. In the brain, highest levels are found in motor cortex and midfrontal cortex (at protein level). As to expression, expressed in the heart, brain, placenta, lung, liver, skeletal muscle and weakly expressed in the kidney. Expressed in the joint synovium.

The protein resides in the nucleus. Transcriptional regulator, potentially with dual roles in transcription initiation and termination. In terms of biological role, binds DNA and functions as a transcriptional activator. Binds to two G/A-rich sites, ME1a1 and ME1a2, within the MYC promoter having greater affinity for the former. Also binds to multiple G/C-rich sites within the promoter of the Sp1 family of transcription factors. Functionally, binds DNA and functions as a transcriptional activator. Inhibits MAZ isoform 1-mediated transcription. Its function is as follows. Binds DNA and functions as a transcriptional activator. This chain is Myc-associated zinc finger protein (MAZ), found in Homo sapiens (Human).